Reading from the N-terminus, the 354-residue chain is Protein RecA (354 aa).

67 to 74 (GPESSGKT) lines the ATP pocket.

The protein belongs to the RecA family.

It localises to the cytoplasm. Its function is as follows. Can catalyze the hydrolysis of ATP in the presence of single-stranded DNA, the ATP-dependent uptake of single-stranded DNA by duplex DNA, and the ATP-dependent hybridization of homologous single-stranded DNAs. It interacts with LexA causing its activation and leading to its autocatalytic cleavage. The sequence is that of Protein RecA from Pasteurella multocida (strain Pm70).